Reading from the N-terminus, the 463-residue chain is Succinate--CoA ligase [ADP-forming] subunit beta, mitochondrial (463 aa).

The N-terminal 52 residues, 1–52, are a transit peptide targeting the mitochondrion; it reads MAASMFYGRLVAVATLRNHRPRTAQRAAAQVLGSSGLFNNHGLQVQQQQQRN. The ATP-grasp domain maps to 61–288; it reads MELLQEAGVS…SNSAYRQKKI (228 aa). N6-acetyllysine is present on lysine 78. Tyrosine 84 is subject to Phosphotyrosine. Position 88 is an N6-acetyllysine; alternate (lysine 88). An N6-succinyllysine; alternate modification is found at lysine 88. ATP-binding positions include lysine 98 and 105–107; that span reads GRG. Residues lysine 129, lysine 139, lysine 143, and lysine 216 each carry the N6-acetyllysine modification. The Mg(2+) site is built by asparagine 258 and aspartate 272. Serine 279 carries the phosphoserine modification. Asparagine 323 is a binding site for substrate. Threonine 341 is modified (phosphothreonine). At lysine 368 the chain carries N6-acetyllysine. 380–382 provides a ligand contact to substrate; it reads GIM.

Belongs to the succinate/malate CoA ligase beta subunit family. ATP-specific subunit beta subfamily. Heterodimer of an alpha and a beta subunit. The beta subunit determines specificity for ATP. Interacts with ALAS2. Mg(2+) serves as cofactor. In terms of tissue distribution, widely expressed. Not expressed in liver and lung.

The protein localises to the mitochondrion. The enzyme catalyses succinate + ATP + CoA = succinyl-CoA + ADP + phosphate. It functions in the pathway carbohydrate metabolism; tricarboxylic acid cycle; succinate from succinyl-CoA (ligase route): step 1/1. Its activity is regulated as follows. Inhibited by itaconate. Its function is as follows. ATP-specific succinyl-CoA synthetase functions in the citric acid cycle (TCA), coupling the hydrolysis of succinyl-CoA to the synthesis of ATP and thus represents the only step of substrate-level phosphorylation in the TCA. The beta subunit provides nucleotide specificity of the enzyme and binds the substrate succinate, while the binding sites for coenzyme A and phosphate are found in the alpha subunit. The chain is Succinate--CoA ligase [ADP-forming] subunit beta, mitochondrial from Homo sapiens (Human).